Here is a 538-residue protein sequence, read N- to C-terminus: Nicotinate phosphoribosyltransferase (538 aa).

Residues Y21 and T210 each coordinate nicotinate. Phosphohistidine is present on H213. R318 contacts nicotinate. T380 contacts 5-phospho-alpha-D-ribose 1-diphosphate.

It belongs to the NAPRTase family. As to quaternary structure, homodimer. Mg(2+) serves as cofactor. Requires Mn(2+) as cofactor. Post-translationally, transiently phosphorylated on a His residue during the reaction cycle. Phosphorylation strongly increases the affinity for substrates and increases the rate of nicotinate D-ribonucleotide production. Dephosphorylation regenerates the low-affinity form of the enzyme, leading to product release. As to expression, abundantly expressed in the small intestine, liver and kidney.

The protein resides in the cytoplasm. It is found in the cytosol. The catalysed reaction is nicotinate + 5-phospho-alpha-D-ribose 1-diphosphate + ATP + H2O = nicotinate beta-D-ribonucleotide + ADP + phosphate + diphosphate. Its pathway is cofactor biosynthesis; NAD(+) biosynthesis; nicotinate D-ribonucleotide from nicotinate: step 1/1. Catalyzes the first step in the biosynthesis of NAD from nicotinic acid, the ATP-dependent synthesis of beta-nicotinate D-ribonucleotide from nicotinate and 5-phospho-D-ribose 1-phosphate. Helps prevent cellular oxidative stress via its role in NAD biosynthesis. This is Nicotinate phosphoribosyltransferase (Naprt) from Mus musculus (Mouse).